We begin with the raw amino-acid sequence, 154 residues long: Endoribonuclease YbeY (154 aa).

Positions 117, 121, and 127 each coordinate Zn(2+).

This sequence belongs to the endoribonuclease YbeY family. Zn(2+) serves as cofactor.

It localises to the cytoplasm. In terms of biological role, single strand-specific metallo-endoribonuclease involved in late-stage 70S ribosome quality control and in maturation of the 3' terminus of the 16S rRNA. This chain is Endoribonuclease YbeY, found in Mycoplasma pneumoniae (strain ATCC 29342 / M129 / Subtype 1) (Mycoplasmoides pneumoniae).